Consider the following 379-residue polypeptide: Lipid-A-disaccharide synthase (379 aa).

It belongs to the LpxB family.

It carries out the reaction a lipid X + a UDP-2-N,3-O-bis[(3R)-3-hydroxyacyl]-alpha-D-glucosamine = a lipid A disaccharide + UDP + H(+). It participates in bacterial outer membrane biogenesis; LPS lipid A biosynthesis. Condensation of UDP-2,3-diacylglucosamine and 2,3-diacylglucosamine-1-phosphate to form lipid A disaccharide, a precursor of lipid A, a phosphorylated glycolipid that anchors the lipopolysaccharide to the outer membrane of the cell. The chain is Lipid-A-disaccharide synthase from Vibrio campbellii (strain ATCC BAA-1116).